Here is a 242-residue protein sequence, read N- to C-terminus: Dehydration-responsive element-binding protein 1J (242 aa).

Over residues 20–29 (SSATTAATAT) the composition is skewed to low complexity. Residues 20–44 (SSATTAATATGPASPKRPAGRTKFQ) are disordered. The segment at residues 50-109 (VFRGVRRRGRAGRWVCEVRVPGSRGDRLWVGTFDTAEEAARAHDAAMLAMCGASASLNFT) is a DNA-binding region (AP2/ERF). The disordered stretch occupies residues 143–184 (FQRRGSTAATATATSGDAASTAPPSSSPVLSPNDDNASSAST). Low complexity predominate over residues 148–184 (STAATATATSGDAASTAPPSSSPVLSPNDDNASSAST).

The protein belongs to the AP2/ERF transcription factor family. ERF subfamily.

It is found in the nucleus. Transcriptional activator that binds specifically to the DNA sequence 5'-[AG]CCGAC-3'. Binding to the C-repeat/DRE element mediates high salinity- and dehydration-inducible transcription. This is Dehydration-responsive element-binding protein 1J (DREB1J) from Oryza sativa subsp. indica (Rice).